Consider the following 348-residue polypeptide: Holliday junction branch migration complex subunit RuvB (348 aa).

The large ATPase domain (RuvB-L) stretch occupies residues 1-184; that stretch reads MTLNRDMVSP…FGIVQRLEFY (184 aa). 9 residues coordinate ATP: Leu23, Arg24, Gly65, Lys68, Thr69, Thr70, Arg174, Tyr184, and Arg221. Thr69 is a Mg(2+) binding site. Residues 185–255 form a small ATPAse domain (RuvB-S) region; it reads AVDHLVLIVE…VAQKALDLLD (71 aa). The tract at residues 258–348 is head domain (RuvB-H); it reads SHGFDTMDRK…QEVSDLFPNE (91 aa). The DNA site is built by Arg294, Arg313, and Arg318.

Belongs to the RuvB family. Homohexamer. Forms an RuvA(8)-RuvB(12)-Holliday junction (HJ) complex. HJ DNA is sandwiched between 2 RuvA tetramers; dsDNA enters through RuvA and exits via RuvB. An RuvB hexamer assembles on each DNA strand where it exits the tetramer. Each RuvB hexamer is contacted by two RuvA subunits (via domain III) on 2 adjacent RuvB subunits; this complex drives branch migration. In the full resolvosome a probable DNA-RuvA(4)-RuvB(12)-RuvC(2) complex forms which resolves the HJ.

The protein localises to the cytoplasm. It carries out the reaction ATP + H2O = ADP + phosphate + H(+). Its function is as follows. The RuvA-RuvB-RuvC complex processes Holliday junction (HJ) DNA during genetic recombination and DNA repair, while the RuvA-RuvB complex plays an important role in the rescue of blocked DNA replication forks via replication fork reversal (RFR). RuvA specifically binds to HJ cruciform DNA, conferring on it an open structure. The RuvB hexamer acts as an ATP-dependent pump, pulling dsDNA into and through the RuvAB complex. RuvB forms 2 homohexamers on either side of HJ DNA bound by 1 or 2 RuvA tetramers; 4 subunits per hexamer contact DNA at a time. Coordinated motions by a converter formed by DNA-disengaged RuvB subunits stimulates ATP hydrolysis and nucleotide exchange. Immobilization of the converter enables RuvB to convert the ATP-contained energy into a lever motion, pulling 2 nucleotides of DNA out of the RuvA tetramer per ATP hydrolyzed, thus driving DNA branch migration. The RuvB motors rotate together with the DNA substrate, which together with the progressing nucleotide cycle form the mechanistic basis for DNA recombination by continuous HJ branch migration. Branch migration allows RuvC to scan DNA until it finds its consensus sequence, where it cleaves and resolves cruciform DNA. The chain is Holliday junction branch migration complex subunit RuvB from Nitrosococcus oceani (strain ATCC 19707 / BCRC 17464 / JCM 30415 / NCIMB 11848 / C-107).